Here is a 173-residue protein sequence, read N- to C-terminus: Photosystem I assembly protein Ycf3 (173 aa).

3 TPR repeats span residues 35–68, 72–105, and 120–153; these read AFSY…EIDP, SYIL…NPSL, and GEQA…APNS.

It belongs to the Ycf3 family.

It localises to the plastid. It is found in the chloroplast thylakoid membrane. Functionally, essential for the assembly of the photosystem I (PSI) complex. May act as a chaperone-like factor to guide the assembly of the PSI subunits. This Mesostigma viride (Green alga) protein is Photosystem I assembly protein Ycf3.